A 164-amino-acid chain; its full sequence is Sorting nexin-3 (164 aa).

One can recognise a PX domain in the interval 40 to 163 (EIEVCNPKTH…VRFIQDPTFQ (124 aa)). A 1,2-diacyl-sn-glycero-3-phospho-(1D-myo-inositol-3-phosphate)-binding residues include Arg-83, Ser-85, Lys-114, Arg-120, and Arg-129.

Belongs to the sorting nexin family.

It is found in the cytoplasm. The protein resides in the golgi apparatus membrane. Its subcellular location is the prevacuolar compartment membrane. Its function is as follows. Required for retention of late Golgi membrane proteins. Component of the retrieval machinery that functions by direct interaction with the cytosolic tails of certain TGN membrane proteins during the sorting/budding process at the prevacuolar compartment. Binds phosphatidylinositol 3-phosphate (PtdIns(P3)). The polypeptide is Sorting nexin-3 (SNX3) (Kluyveromyces lactis (strain ATCC 8585 / CBS 2359 / DSM 70799 / NBRC 1267 / NRRL Y-1140 / WM37) (Yeast)).